A 526-amino-acid polypeptide reads, in one-letter code: MADGQLKVLTTLDHARTQWYHFMAIVIAGMGFFTDAYDLFCISLVSKLLGRIYYTDLAGDNPGSLPPNVSAAVNGVALCGTLAGQLFFGWLGDKLGRKSVYGFTLVLMVVCSVASGLSFGRTAKGVVATLCFFRFWLGFGIGGDYPLSATIMSEYANKRTRGAFIAAVFAMQGFGILFGAIVALVVSAGFRNAYPAPSYADGRAASLVPEADYVWRIILMFGTVPAALTYYWRMKMPETARYTALIARNAKQAAADMSKVLDTEIQEDADRAEAVAAGGAGNEWGLFSRQFVRRHGVHLVATTSTWFLLDIAFYSQNLFQKDIFSKVGWIPPARTMNAVEEVFRIARAQALIALCGTIPGYWFTVAFIDVAGRFAIQLMGFAMMTVFMLGLAAPYHHWTTPGNHTGFVVMYGFTFFFANFGPNATTFIVPAEIYPARLRSTCHGISAAAGKAGAIVGAFGFLYAAQDPHKPEAGYKPGIGIRNALFVLAGTNFLGMLMTLLVPESKGMSLEEVSKENVADDEEATA.

The Cytoplasmic segment spans residues 1 to 21; sequence MADGQLKVLTTLDHARTQWYH. The helical transmembrane segment at 22-42 threads the bilayer; that stretch reads FMAIVIAGMGFFTDAYDLFCI. Residues 43–70 are Extracellular-facing; it reads SLVSKLLGRIYYTDLAGDNPGSLPPNVS. The chain crosses the membrane as a helical span at residues 71–91; that stretch reads AAVNGVALCGTLAGQLFFGWL. The Cytoplasmic segment spans residues 92-99; sequence GDKLGRKS. Residues 100-120 traverse the membrane as a helical segment; sequence VYGFTLVLMVVCSVASGLSFG. Residues 121–124 are Extracellular-facing; sequence RTAK. A helical membrane pass occupies residues 125–145; the sequence is GVVATLCFFRFWLGFGIGGDY. The Cytoplasmic segment spans residues 146–163; that stretch reads PLSATIMSEYANKRTRGA. Residues 164-184 form a helical membrane-spanning segment; the sequence is FIAAVFAMQGFGILFGAIVAL. Over 185–211 the chain is Extracellular; the sequence is VVSAGFRNAYPAPSYADGRAASLVPEA. The chain crosses the membrane as a helical span at residues 212–232; that stretch reads DYVWRIILMFGTVPAALTYYW. The Cytoplasmic segment spans residues 233 to 294; that stretch reads RMKMPETARY…GLFSRQFVRR (62 aa). A helical transmembrane segment spans residues 295-315; that stretch reads HGVHLVATTSTWFLLDIAFYS. At 316–349 the chain is on the extracellular side; sequence QNLFQKDIFSKVGWIPPARTMNAVEEVFRIARAQ. A helical membrane pass occupies residues 350 to 370; the sequence is ALIALCGTIPGYWFTVAFIDV. The Cytoplasmic portion of the chain corresponds to 371-373; it reads AGR. A helical transmembrane segment spans residues 374–394; sequence FAIQLMGFAMMTVFMLGLAAP. Residues 395–407 lie on the Extracellular side of the membrane; it reads YHHWTTPGNHTGF. A helical membrane pass occupies residues 408–428; the sequence is VVMYGFTFFFANFGPNATTFI. Residues 429 to 444 are Cytoplasmic-facing; that stretch reads VPAEIYPARLRSTCHG. The helical transmembrane segment at 445–465 threads the bilayer; it reads ISAAAGKAGAIVGAFGFLYAA. Residues 466-483 lie on the Extracellular side of the membrane; that stretch reads QDPHKPEAGYKPGIGIRN. A helical membrane pass occupies residues 484–504; that stretch reads ALFVLAGTNFLGMLMTLLVPE. The Cytoplasmic segment spans residues 505-526; sequence SKGMSLEEVSKENVADDEEATA.

Belongs to the major facilitator superfamily. Phosphate:H(+) symporter (TC 2.A.1.9) family. As to expression, expressed at low levels in roots.

The protein localises to the membrane. Its function is as follows. High-affinity transporter for external inorganic phosphate. This is Probable inorganic phosphate transporter 1-3 (PHT1-3) from Oryza sativa subsp. japonica (Rice).